We begin with the raw amino-acid sequence, 376 residues long: Enoyl-[acyl-carrier-protein] reductase, mitochondrial (376 aa).

The transit peptide at 1 to 12 (MLRTLRTSQLAR) directs the protein to the mitochondrion. Catalysis depends on Tyr-79, which acts as the Proton donor. NADP(+) is bound by residues Asn-160, 183 to 186 (NSGV), 206 to 208 (RDR), 277 to 280 (YGGM), 302 to 304 (YWL), and Lys-368.

This sequence belongs to the zinc-containing alcohol dehydrogenase family. Quinone oxidoreductase subfamily. Homodimer.

The protein resides in the mitochondrion matrix. The enzyme catalyses a 2,3-saturated acyl-[ACP] + NADP(+) = a (2E)-enoyl-[ACP] + NADPH + H(+). Its function is as follows. Catalyzes the NADPH-dependent reduction of trans-2-enoyl thioesters in mitochondrial fatty acid synthesis (fatty acid synthesis type II). Fatty acid chain elongation in mitochondria uses acyl carrier protein (ACP) as an acyl group carrier, but the enzyme accepts both ACP and CoA thioesters as substrates in vitro. Required for respiration and the maintenance of the mitochondrial compartment. The chain is Enoyl-[acyl-carrier-protein] reductase, mitochondrial (ETR1) from Yarrowia lipolytica (strain CLIB 122 / E 150) (Yeast).